The primary structure comprises 355 residues: Erythronate-4-phosphate dehydrogenase (355 aa).

Substrate-binding residues include serine 45 and threonine 66. Aspartate 146 contacts NAD(+). The active site involves arginine 206. Aspartate 229 is a binding site for NAD(+). Glutamate 234 is a catalytic residue. Catalysis depends on histidine 251, which acts as the Proton donor. Glycine 254 provides a ligand contact to NAD(+). Tyrosine 255 is a binding site for substrate.

It belongs to the D-isomer specific 2-hydroxyacid dehydrogenase family. PdxB subfamily. As to quaternary structure, homodimer.

The protein resides in the cytoplasm. It catalyses the reaction 4-phospho-D-erythronate + NAD(+) = (R)-3-hydroxy-2-oxo-4-phosphooxybutanoate + NADH + H(+). It functions in the pathway cofactor biosynthesis; pyridoxine 5'-phosphate biosynthesis; pyridoxine 5'-phosphate from D-erythrose 4-phosphate: step 2/5. Functionally, catalyzes the oxidation of erythronate-4-phosphate to 3-hydroxy-2-oxo-4-phosphonooxybutanoate. This is Erythronate-4-phosphate dehydrogenase from Acinetobacter baumannii (strain SDF).